Here is a 77-residue protein sequence, read N- to C-terminus: Large ribosomal subunit protein uL29 (77 aa).

It belongs to the universal ribosomal protein uL29 family.

The chain is Large ribosomal subunit protein uL29 from Gluconobacter oxydans (strain 621H) (Gluconobacter suboxydans).